A 342-amino-acid polypeptide reads, in one-letter code: Protein BASIC PENTACYSTEINE6 (342 aa).

Residues 41-67 (AIQERNLAISEKKAAVAERDMAFLQRD) are a coiled coil. The segment at 41–76 (AIQERNLAISEKKAAVAERDMAFLQRDTAIAERNNA) is alanine-zipper. The segment at 143–199 (REMEPNDGLPTSPPAGSTLESAKPKRGKRVNPKATTQTAANKRGPKNQRKVKKESED) is disordered. The tract at residues 164–195 (AKPKRGKRVNPKATTQTAANKRGPKNQRKVKK) is required for nucleus and nucleolus localization. Residues 185–194 (RGPKNQRKVK) show a composition bias toward basic residues. Positions 192–195 (KVKK) match the Nuclear localization signal motif.

It belongs to the BBR/BPC family. Homodimer. Heterodimer with BPC4. In terms of tissue distribution, expressed in seedlings, leaves and pistils. Detected in the base of flowers and tips of carpels, in sepal vasculature, in young rosette, in the lateral and tip of primary roots, and in ovule at the exception of the outer integument.

It is found in the nucleus. The protein resides in the nucleolus. Transcriptional regulator that specifically binds to GA-rich elements (GAGA-repeats) present in regulatory sequences of genes involved in developmental processes. The polypeptide is Protein BASIC PENTACYSTEINE6 (BPC6) (Arabidopsis thaliana (Mouse-ear cress)).